Reading from the N-terminus, the 412-residue chain is MQPSSLLPLALCLLAAPASALVRIPLHKFTSIRRTMSEVGGSVEDLIAKGPVSKYSQAVPAVTEGPIPEVLKNYMDAQYYGEIGIGTPPQCFTVVFDTGSSNLWVPSIHCKLLDIACWIHHKYNSDKSSTYVKNGTSFDIHYGSGSLSGYLSQDTVSVPCQSASSASALGGVKVERQVFGEATKQPGITFIAAKFDGILGMAYPRISVNNVLPVFDNLMQQKLVDQNIFSFYLSRDPDAQPGGELMLGGTDSKYYKGSLSYLNVTRKAYWQVHLDQVEVASGLTLCKEGCEAIVDTGTSLMVGPVDEVRELQKAIGAVPLIQGEYMIPCEKVSTLPAITLKLGGKGYKLSPEDYTLKVSQAGKTLCLSGFMGMDIPPPSGPLWILGDVFIGRYYTVFDRDNNRVGFAEAARL.

A signal peptide spans 1-20 (MQPSSLLPLALCLLAAPASA). A propeptide spans 21 to 64 (LVRIPLHKFTSIRRTMSEVGGSVEDLIAKGPVSKYSQAVPAVTE) (activation peptide). O-linked (GalNAc...) threonine glycosylation is present at Thr63. A Peptidase A1 domain is found at 79–407 (YYGEIGIGTP…DRDNNRVGFA (329 aa)). 2 disulfides stabilise this stretch: Cys91–Cys160 and Cys110–Cys117. The active site involves Asp97. N-linked (GlcNAc...) asparagine glycans are attached at residues Asn134 and Asn263. A disulfide bridge links Cys286 with Cys290. Asp295 is a catalytic residue. An intrachain disulfide couples Cys329 to Cys366.

Belongs to the peptidase A1 family. As to quaternary structure, consists of a light chain and a heavy chain. Interacts with ADAM30; this leads to activation of CTSD. Interacts with GRN; stabilizes CTSD; increases its proteolytic activity. Post-translationally, N- and O-glycosylated. Undergoes proteolytic cleavage and activation by ADAM30. In terms of processing, as well as the major heavy chain which starts at Leu-169, 2 minor forms starting at Gly-170 and Gly-171 have been identified. An additional form starting at Ala-168 has also been identified. Expressed in the aorta extracellular space (at protein level). Expressed in liver (at protein level).

The protein resides in the lysosome. It is found in the melanosome. Its subcellular location is the secreted. It localises to the extracellular space. The enzyme catalyses Specificity similar to, but narrower than, that of pepsin A. Does not cleave the 4-Gln-|-His-5 bond in B chain of insulin.. Acid protease active in intracellular protein breakdown. Plays a role in APP processing following cleavage and activation by ADAM30 which leads to APP degradation. Involved in the pathogenesis of several diseases such as breast cancer and possibly Alzheimer disease. The sequence is that of Cathepsin D (CTSD) from Homo sapiens (Human).